Reading from the N-terminus, the 905-residue chain is Translation initiation factor IF-2 (905 aa).

Residues 50 to 62 (HYEAKGGEDKAAE) are compositionally biased toward basic and acidic residues. A disordered region spans residues 50–306 (HYEAKGGEDK…QKHEVGGVRL (257 aa)). Residues 63–75 (KNAPAATPASASK) are compositionally biased toward low complexity. The span at 89–125 (GPKPSAAPKPGAAPKPGGAPKPGGAPKPGATPKPGGA) shows a compositional bias: pro residues. The span at 161–171 (PFSTGSSSDRP) shows a compositional bias: low complexity. Residues 233 to 276 (GSGGGGRGRGGRGGGPGHGGPGHGGFRGRGGRRGGTAGAFGRPG) show a composition bias toward gly residues. The segment covering 280–290 (RRGKKSKRQKR) has biased composition (basic residues). Residues 291 to 302 (HEFEEQQKHEVG) show a composition bias toward basic and acidic residues. The 175-residue stretch at 401 to 575 (KRPPVVTVMG…LTADAALELT (175 aa)) folds into the tr-type G domain. The G1 stretch occupies residues 410-417 (GHVDHGKT). 410–417 (GHVDHGKT) lines the GTP pocket. The tract at residues 435-439 (GITQG) is G2. The segment at 460-463 (DTPG) is G3. Residues 460 to 464 (DTPGH) and 514 to 517 (NKID) each bind GTP. The G4 stretch occupies residues 514–517 (NKID). The G5 stretch occupies residues 550-552 (SAK).

It belongs to the TRAFAC class translation factor GTPase superfamily. Classic translation factor GTPase family. IF-2 subfamily.

Its subcellular location is the cytoplasm. Functionally, one of the essential components for the initiation of protein synthesis. Protects formylmethionyl-tRNA from spontaneous hydrolysis and promotes its binding to the 30S ribosomal subunits. Also involved in the hydrolysis of GTP during the formation of the 70S ribosomal complex. This Corynebacterium aurimucosum (strain ATCC 700975 / DSM 44827 / CIP 107346 / CN-1) (Corynebacterium nigricans) protein is Translation initiation factor IF-2.